The chain runs to 123 residues: Putative oocyte-secreted protein 1 homolog (123 aa).

The first 26 residues, 1–26 (MKTILGFKGLFYLHSLIWTCAGDWSA), serve as a signal peptide directing secretion.

Belongs to the PLAC1 family.

The protein localises to the secreted. Functionally, may be involved in cell differentiation. This Homo sapiens (Human) protein is Putative oocyte-secreted protein 1 homolog (OOSP1).